A 179-amino-acid chain; its full sequence is Ribosome-recycling factor (179 aa).

This sequence belongs to the RRF family.

Its subcellular location is the cytoplasm. In terms of biological role, responsible for the release of ribosomes from messenger RNA at the termination of protein biosynthesis. May increase the efficiency of translation by recycling ribosomes from one round of translation to another. In Chlamydia trachomatis serovar D (strain ATCC VR-885 / DSM 19411 / UW-3/Cx), this protein is Ribosome-recycling factor.